Here is a 571-residue protein sequence, read N- to C-terminus: Serine/threonine-protein kinase Nek7 (571 aa).

Residues 19–277 form the Protein kinase domain; that stretch reads YHVVEQVRRG…LRNPSLQPYL (259 aa). ATP-binding positions include 25–33 and K48; that span reads VRRGKSSSD. D144 functions as the Proton acceptor in the catalytic mechanism. Disordered stretches follow at residues 298–321 and 338–363; these read SPKD…SREK and TETG…ETKR. Residues 312-321 show a composition bias toward basic and acidic residues; that stretch reads FGKERVSREK. The segment covering 342–351 has biased composition (low complexity); sequence SSSSSQPASS.

It belongs to the protein kinase superfamily. NEK Ser/Thr protein kinase family. NIMA subfamily.

The enzyme catalyses L-seryl-[protein] + ATP = O-phospho-L-seryl-[protein] + ADP + H(+). It catalyses the reaction L-threonyl-[protein] + ATP = O-phospho-L-threonyl-[protein] + ADP + H(+). Functionally, may be involved in plant development processes. In Arabidopsis thaliana (Mouse-ear cress), this protein is Serine/threonine-protein kinase Nek7 (NEK7).